The chain runs to 574 residues: MFSDYASRFLAQSRFSSVDQRNFKYPTSRSNLQSVSIDRNSSIDSHETDLSAGSSSLHGLNSLIDSGSIHWQLREQEQSNSHISRNENELFSKENSIYNGNFSENLGVQPNPQTISHESVNEEYTELPYDAHLPSEQKVPDRKWGLTFGFLTLALFTYSFLMVWRTNPNIPPATSPYAAIQKAFPLFHKDAIICMMLSVIWLFCLVAIPRFLYFLLASVPLTMFAFAVYLLKASRIHLETSIQPKLMLLTGIILLVAPILLSYYVWRRRIHFETSFNIIRLACRVIADIPQITLIFISFLFSFYVLIFIWVRLFARLFLRGSTLVGSVWVLPRSSWVLASFYSLHFLWLCTFFHALQCAIISSIVSQWFFYRDTKSSATKTNLVSHFFYHVVSNQYGLCAFSSFLVVITKVPLHFLPTWLRHVSRIVYYMFSKTSASYVTSPLTLAYASIYSVPYMNASKALYQIEQLNRVGLRRRSYYFSKYTLLAARSLLAIGVGVTSWNYSIHENGVFYGYIVGLLGGFLAWLIIGAIEGGLSMIVDALLICSIIDISSCQGDPNGSHCFEAWQLFESNGY.

N-linked (GlcNAc...) asparagine glycosylation is found at asparagine 40 and asparagine 101. 8 helical membrane passes run 144 to 164, 189 to 209, 211 to 231, 246 to 266, 291 to 311, 336 to 356, 396 to 416, and 434 to 456; these read WGLTFGFLTLALFTYSFLMVW, KDAIICMMLSVIWLFCLVAIP, FLYFLLASVPLTMFAFAVYLL, LMLLTGIILLVAPILLSYYVW, QITLIFISFLFSFYVLIFIWV, WVLASFYSLHFLWLCTFFHAL, YGLCAFSSFLVVITKVPLHFL, and TSASYVTSPLTLAYASIYSVPYM. A glycan (N-linked (GlcNAc...) asparagine) is linked at asparagine 457. 2 helical membrane-spanning segments follow: residues 485 to 505 and 511 to 531; these read LLAARSLLAIGVGVTSWNYSI and FYGYIVGLLGGFLAWLIIGAI. N-linked (GlcNAc...) asparagine glycosylation is present at asparagine 558.

It belongs to the CTL (choline transporter-like) family. Interacts with atg9.

It is found in the endoplasmic reticulum membrane. The protein resides in the preautophagosomal structure membrane. Required for the normal organization of the preautophagosomal structure (PAS) and for the correct subcellular location of atg9. This chain is Choline transporter-like protein ctl1 (ctl1), found in Schizosaccharomyces pombe (strain 972 / ATCC 24843) (Fission yeast).